A 57-amino-acid chain; its full sequence is Alpha-conotoxin-like Sm1.2 (57 aa).

The signal sequence occupies residues 1 to 16 (MFTVFLLVVLATTVVS). A propeptide spanning residues 17–42 (FPSDRESDGANDEARTDEPEEHGPDR) is cleaved from the precursor. The interval 17 to 46 (FPSDRESDGANDEARTDEPEEHGPDRNGCC) is disordered. The segment covering 19 to 41 (SDRESDGANDEARTDEPEEHGPD) has biased composition (basic and acidic residues). 2 disulfides stabilise this stretch: Cys45–Cys51 and Cys46–Cys56. Cys56 carries the post-translational modification Cysteine amide.

The protein belongs to the conotoxin A superfamily. In terms of tissue distribution, expressed by the venom duct.

Its subcellular location is the secreted. Functionally, alpha-conotoxins act on postsynaptic membranes, they bind to the nicotinic acetylcholine receptors (nAChR) and thus inhibit them. This is Alpha-conotoxin-like Sm1.2 from Conus stercusmuscarum (Fly-specked cone).